Here is a 211-residue protein sequence, read N- to C-terminus: Porin MspA (211 aa).

A signal peptide spans 1-27 (MKAISRVLIAMVAAIAALFTSTGTSHA).

The protein belongs to the mycobacterial porin (TC 1.B.24) family. In terms of assembly, forms very stable octamers. Isolated as a 100 kDa complex that can be reduced to monomers upon boiling in 80% dimethyl sulfoxide for 15 minutes. Structures show a goblet with the wide end on the exterior of the outer membrane and a central channel. It is not known if mixed oligomers of MspA with other Msp subunits form in vivo.

It localises to the cell outer membrane. The protein resides in the secreted. It is found in the cell wall. In terms of biological role, the major porin in this organism, forms a water-filled channel which favors the permeation of cations, amino acids, iron Fe(3+) and less efficiently phosphate. Does not transport Fe-ExoMS, the predominant siderophore. Plays a role in transport of beta-lactamase and hydrophilic fluoroquinolone antibiotics such as norfloxacin as well as chloramphenicol. There are about 2400 porins in wild-type, 800 in an mspA deletion and 150 in a double mspA-mspC deletion. Different conductance values with maxima at 2.3 and 4.6 nanosiemens might be caused by a simultaneous reconstitution of MspA channels into the membrane or by the existence of different MspA conformations. The chain is Porin MspA (mspA) from Mycolicibacterium smegmatis (strain ATCC 700084 / mc(2)155) (Mycobacterium smegmatis).